Consider the following 444-residue polypeptide: Sonic hedgehog protein (444 aa).

The N-terminal stretch at Met-1 to Ala-24 is a signal peptide. A lipid anchor (N-palmitoyl cysteine) is attached at Cys-25. Residues Lys-33–Lys-39 carry the Cardin-Weintraub motif. The Ca(2+) site is built by Glu-90, Glu-91, Asp-96, Thr-126, Glu-127, Asp-130, and Asp-132. His-141, Asp-148, and His-183 together coordinate Zn(2+). Gly-198 is lipidated: Cholesterol glycine ester. 3 tandem repeats follow at residues Gln-386 to His-393, Gln-394 to His-401, and Val-403 to His-409. Residues Gln-386–His-409 are 3 X 8 AA tandem repeats of Q-V-D-L-Q-S-H-H.

It belongs to the hedgehog family. Interacts with HHATL/GUP1 which negatively regulates HHAT-mediated palmitoylation of the SHH N-terminus. Interacts with BOC and CDON. Interacts with HHIP. Interacts with DISP1 via its cholesterol anchor. Interacts with SCUBE2. As to quaternary structure, multimer. In terms of processing, the C-terminal domain displays an autoproteolysis activity and a cholesterol transferase activity. Both activities result in the cleavage of the full-length protein and covalent attachment of a cholesterol moiety to the C-terminal of the newly generated N-terminal fragment (ShhN). Cholesterylation is required for the sonic hedgehog protein N-product targeting to lipid rafts and multimerization. ShhN is the active species in both local and long-range signaling, whereas the C-product (ShhC) is degraded in the reticulum endoplasmic. Post-translationally, N-palmitoylation by HHAT of ShhN is required for sonic hedgehog protein N-product multimerization and full activity. It is a prerequisite for the membrane-proximal positioning and the subsequent shedding of this N-terminal peptide. The lipidated N- and C-terminal peptides of ShhNp can be cleaved (shedding). The N-terminal palmitoylated peptide is cleaved at the Cardin-Weintraub (CW) motif site. The cleavage reduced the interactions with heparan sulfate. The cleavage is enhanced by SCUBE2. As to expression, strongly expressed in notochord and neural floor plate during embryogenesis. In tadpole, high expression is observed in pancreas/stomach, moderate expression in tail, and low expression in intestine, brain, and hind limb.

It localises to the endoplasmic reticulum membrane. The protein resides in the golgi apparatus membrane. Its subcellular location is the cell membrane. The enzyme catalyses glycyl-L-cysteinyl-[protein] + cholesterol + H(+) = [protein]-C-terminal glycyl cholesterol ester + N-terminal L-cysteinyl-[protein]. Its function is as follows. The C-terminal part of the sonic hedgehog protein precursor displays an autoproteolysis and a cholesterol transferase activity. Both activities result in the cleavage of the full-length protein into two parts (ShhN and ShhC) followed by the covalent attachment of a cholesterol moiety to the C-terminal of the newly generated ShhN. Both activities occur in the endoplasmic reticulum. Once cleaved, ShhC is degraded in the endoplasmic reticulum. The dually lipidated sonic hedgehog protein N-product (ShhNp) is a morphogen which is essential for a variety of patterning events during development. Induces ventral cell fate in the neural tube and somites. Involved in the patterning of the anterior-posterior axis of the developing limb bud. Essential for axon guidance. Binds to the patched (PTCH1) receptor, which functions in association with smoothened (SMO), to activate the transcription of target genes. In the absence of SHH, PTCH1 represses the constitutive signaling activity of SMO. This is Sonic hedgehog protein from Xenopus laevis (African clawed frog).